Reading from the N-terminus, the 314-residue chain is Palmitoyl-protein thioesterase 1 (314 aa).

The N-terminal stretch at 1-25 (MISICCSRFSCILFLLFLIFSLVLS) is a signal peptide. Disulfide bonds link Cys-53–Cys-54, Cys-104–Cys-136, and Cys-160–Cys-168. Ser-123 serves as the catalytic Nucleophile. Asn-240 carries an N-linked (GlcNAc...) asparagine glycan. Residues Asp-241 and His-295 contribute to the active site.

It belongs to the palmitoyl-protein thioesterase family. Ubiquitously expressed.

It is found in the lysosome. It carries out the reaction S-hexadecanoyl-L-cysteinyl-[protein] + H2O = L-cysteinyl-[protein] + hexadecanoate + H(+). Cleaves thioester-linked long fatty acyl groups such as palmitate from modified cysteine residues in proteins or peptides. The sequence is that of Palmitoyl-protein thioesterase 1 (Ppt1) from Drosophila melanogaster (Fruit fly).